The primary structure comprises 288 residues: Shikimate dehydrogenase (NADP(+)) (288 aa).

Shikimate contacts are provided by residues 18–20 (SRS) and Thr-65. The Proton acceptor role is filled by Lys-69. An NADP(+)-binding site is contributed by Glu-81. Shikimate is bound by residues Asn-90 and Asp-106. Residues 131–135 (GAGGA), 155–160 (NRTLAK), and Met-223 contribute to the NADP(+) site. Tyr-225 is a binding site for shikimate. Gly-246 is a binding site for NADP(+).

The protein belongs to the shikimate dehydrogenase family. In terms of assembly, homodimer.

The catalysed reaction is shikimate + NADP(+) = 3-dehydroshikimate + NADPH + H(+). Its pathway is metabolic intermediate biosynthesis; chorismate biosynthesis; chorismate from D-erythrose 4-phosphate and phosphoenolpyruvate: step 4/7. In terms of biological role, involved in the biosynthesis of the chorismate, which leads to the biosynthesis of aromatic amino acids. Catalyzes the reversible NADPH linked reduction of 3-dehydroshikimate (DHSA) to yield shikimate (SA). The protein is Shikimate dehydrogenase (NADP(+)) of Verminephrobacter eiseniae (strain EF01-2).